The primary structure comprises 196 residues: Small ribosomal subunit protein uS4c (196 aa).

Residues 15–42 form a disordered region; it reads LGALPGLTRKTPKSGSNQKKKFNSGKKE. One can recognise an S4 RNA-binding domain in the interval 89–150; that stretch reads MRLDNILFRL…NQRSKRLVQN (62 aa).

The protein belongs to the universal ribosomal protein uS4 family. As to quaternary structure, part of the 30S ribosomal subunit. Contacts protein S5. The interaction surface between S4 and S5 is involved in control of translational fidelity.

It localises to the plastid. It is found in the chloroplast. In terms of biological role, one of the primary rRNA binding proteins, it binds directly to 16S rRNA where it nucleates assembly of the body of the 30S subunit. With S5 and S12 plays an important role in translational accuracy. This is Small ribosomal subunit protein uS4c (rps4) from Cenchrus longisetus (Feathertop).